A 617-amino-acid polypeptide reads, in one-letter code: V-type proton ATPase catalytic subunit A (617 aa).

Phosphothreonine is present on T136. 250–257 lines the ATP pocket; the sequence is GAFGCGKT. S384 carries the phosphoserine; by AMPK modification.

Belongs to the ATPase alpha/beta chains family. As to quaternary structure, V-ATPase is a heteromultimeric enzyme made up of two complexes: the ATP-hydrolytic V1 complex and the proton translocation V0 complex. The V1 complex consists of three catalytic AB heterodimers that form a heterohexamer, three peripheral stalks each consisting of EG heterodimers, one central rotor including subunits D and F, and the regulatory subunits C and H. The proton translocation complex V0 consists of the proton transport subunit a, a ring of proteolipid subunits c9c'', rotary subunit d, subunits e and f, and the accessory subunits ATP6AP1/Ac45 and ATP6AP2/PRR. Interacts with the V0 complex V-ATPase subunit a4 ATP6V0A4. Interacts with WFS1. Interacts with alpha-crystallin B chain/CRYAB and with MTOR, forming a ternary complex. Post-translationally, phosphorylation at Ser-384 by AMPK down-regulates its enzyme activity.

Its subcellular location is the cytoplasm. It localises to the cytosol. The protein resides in the cytoplasmic vesicle. The protein localises to the secretory vesicle. It is found in the clathrin-coated vesicle membrane. Its subcellular location is the lysosome. It carries out the reaction ATP + H2O + 4 H(+)(in) = ADP + phosphate + 5 H(+)(out). ATP hydrolysis occurs at the interface between the nucleotide-binding domains of subunits A and B. ATP hydrolysis triggers a conformational change in the subunits D and F, which induces a shift of subunit d. The c-ring is subsequently rotated and results in a continuous proton translocation across the membrane. Functionally, catalytic subunit of the V1 complex of vacuolar(H+)-ATPase (V-ATPase), a multisubunit enzyme composed of a peripheral complex (V1) that hydrolyzes ATP and a membrane integral complex (V0) that translocates protons. V-ATPase is responsible for acidifying and maintaining the pH of intracellular compartments and in some cell types, is targeted to the plasma membrane, where it is responsible for acidifying the extracellular environment. In aerobic conditions, involved in intracellular iron homeostasis, thus triggering the activity of Fe(2+) prolyl hydroxylase (PHD) enzymes, and leading to HIF1A hydroxylation and subsequent proteasomal degradation. May play a role in neurite development and synaptic connectivity. In Sus scrofa (Pig), this protein is V-type proton ATPase catalytic subunit A (ATP6V1A).